A 115-amino-acid polypeptide reads, in one-letter code: Large ribosomal subunit protein bL20c (115 aa).

The protein belongs to the bacterial ribosomal protein bL20 family.

The protein localises to the plastid. It localises to the chloroplast. In terms of biological role, binds directly to 23S ribosomal RNA and is necessary for the in vitro assembly process of the 50S ribosomal subunit. It is not involved in the protein synthesizing functions of that subunit. The chain is Large ribosomal subunit protein bL20c from Emiliania huxleyi (Coccolithophore).